Reading from the N-terminus, the 122-residue chain is Large ribosomal subunit protein uL14 (122 aa).

The protein belongs to the universal ribosomal protein uL14 family. Part of the 50S ribosomal subunit. Forms a cluster with proteins L3 and L19. In the 70S ribosome, L14 and L19 interact and together make contacts with the 16S rRNA in bridges B5 and B8.

Functionally, binds to 23S rRNA. Forms part of two intersubunit bridges in the 70S ribosome. This chain is Large ribosomal subunit protein uL14, found in Leifsonia xyli subsp. xyli (strain CTCB07).